The chain runs to 306 residues: MANITAALVKELREKTGAGMMDCKGALNETNGDLEAAVDWLRKKGLAKAAKKAGRVAAEGLVAVESAGRHAAVVEVNSETDFVARNDGFQAFAREAAKLALNTDGTLEGLQAATFPGSSETVQEKLSNLIATIGENMTLRRVAKLEVSKGVIASYVHGQINEGLGKIGVLVALESEGDVEFLSTLGRQIAMHVAATNPTALDASGVDQAVVERESNILREKNAGKPDHVMAKIVESGLKSYYKEVTLLEQPFVHDGSKTVSQILKEAAGKAGGEVAIKGFVRYALGEGIEKEEGPDFAAEVASMSR.

Residues 80–83 (TDFV) are involved in Mg(2+) ion dislocation from EF-Tu.

This sequence belongs to the EF-Ts family.

It localises to the cytoplasm. Associates with the EF-Tu.GDP complex and induces the exchange of GDP to GTP. It remains bound to the aminoacyl-tRNA.EF-Tu.GTP complex up to the GTP hydrolysis stage on the ribosome. The chain is Elongation factor Ts from Methylorubrum extorquens (strain CM4 / NCIMB 13688) (Methylobacterium extorquens).